Here is a 437-residue protein sequence, read N- to C-terminus: Adenylosuccinate synthetase (437 aa).

GTP-binding positions include 25–31 (GDEGKGK), 53–55 (GHT), and Lys62. Asp26 functions as the Proton acceptor in the catalytic mechanism. Positions 26 and 53 each coordinate Mg(2+). IMP is bound by residues 26-29 (DEGK) and 51-54 (NAGH). His54 (proton donor) is an active-site residue. 4 residues coordinate IMP: Thr141, Arg155, Asn232, and Thr247. Thr307 contacts GTP. Position 307 to 313 (307 to 313 (TTTKRPR)) interacts with substrate. Arg311 is a binding site for IMP. Residues Arg313, 339-341 (KLD), and 425-427 (GIG) each bind GTP.

Belongs to the adenylosuccinate synthetase family. In terms of assembly, homodimer. Mg(2+) is required as a cofactor.

The protein resides in the cytoplasm. The catalysed reaction is IMP + L-aspartate + GTP = N(6)-(1,2-dicarboxyethyl)-AMP + GDP + phosphate + 2 H(+). The protein operates within purine metabolism; AMP biosynthesis via de novo pathway; AMP from IMP: step 1/2. Its function is as follows. Plays an important role in the salvage pathway for purine nucleotide biosynthesis. Catalyzes the first committed step in the biosynthesis of AMP from IMP. This Plasmodium vivax (strain Salvador I) protein is Adenylosuccinate synthetase.